Reading from the N-terminus, the 82-residue chain is Sec-independent protein translocase protein TatA (82 aa).

A helical membrane pass occupies residues 1 to 21 (MGGISIWQLLIIAVIIVLLFG). Residues 48–82 (SAKDAKKDADFVPQNLEKKEAETVEKQKQNDKEQA) form a disordered region.

Belongs to the TatA/E family. The Tat system comprises two distinct complexes: a TatABC complex, containing multiple copies of TatA, TatB and TatC subunits, and a separate TatA complex, containing only TatA subunits. Substrates initially bind to the TatABC complex, which probably triggers association of the separate TatA complex to form the active translocon.

The protein localises to the cell inner membrane. Functionally, part of the twin-arginine translocation (Tat) system that transports large folded proteins containing a characteristic twin-arginine motif in their signal peptide across membranes. TatA could form the protein-conducting channel of the Tat system. This is Sec-independent protein translocase protein TatA from Aliivibrio salmonicida (strain LFI1238) (Vibrio salmonicida (strain LFI1238)).